The chain runs to 58 residues: Large ribosomal subunit protein bL32 (58 aa).

The protein belongs to the bacterial ribosomal protein bL32 family.

The polypeptide is Large ribosomal subunit protein bL32 (Caldicellulosiruptor saccharolyticus (strain ATCC 43494 / DSM 8903 / Tp8T 6331)).